The primary structure comprises 159 residues: Ribosomal RNA large subunit methyltransferase H (159 aa).

S-adenosyl-L-methionine is bound by residues leucine 76, glycine 108, and 127-132; that span reads FGLLTL.

Belongs to the RNA methyltransferase RlmH family. Homodimer.

It localises to the cytoplasm. The enzyme catalyses pseudouridine(1915) in 23S rRNA + S-adenosyl-L-methionine = N(3)-methylpseudouridine(1915) in 23S rRNA + S-adenosyl-L-homocysteine + H(+). In terms of biological role, specifically methylates the pseudouridine at position 1915 (m3Psi1915) in 23S rRNA. This Streptococcus pyogenes serotype M6 (strain ATCC BAA-946 / MGAS10394) protein is Ribosomal RNA large subunit methyltransferase H.